Reading from the N-terminus, the 151-residue chain is Transcriptional repressor NrdR (151 aa).

A zinc finger lies at 3–34; the sequence is CPFCHNDQSRVIDSRVIDSGSAIRRRRECTQC. In terms of domain architecture, ATP-cone spans 46–136; it reads LLVVKRNGLT…VYKSFESADD (91 aa).

It belongs to the NrdR family. Requires Zn(2+) as cofactor.

In terms of biological role, negatively regulates transcription of bacterial ribonucleotide reductase nrd genes and operons by binding to NrdR-boxes. This chain is Transcriptional repressor NrdR, found in Corynebacterium diphtheriae (strain ATCC 700971 / NCTC 13129 / Biotype gravis).